The following is a 96-amino-acid chain: Large ribosomal subunit protein bL27 (96 aa).

The propeptide occupies 1 to 9 (MLRLDLQFF).

It belongs to the bacterial ribosomal protein bL27 family. The N-terminus is cleaved by ribosomal processing cysteine protease Prp.

This chain is Large ribosomal subunit protein bL27, found in Geobacillus kaustophilus (strain HTA426).